The following is a 188-amino-acid chain: Elongation factor P (188 aa).

Belongs to the elongation factor P family.

It is found in the cytoplasm. It participates in protein biosynthesis; polypeptide chain elongation. In terms of biological role, involved in peptide bond synthesis. Stimulates efficient translation and peptide-bond synthesis on native or reconstituted 70S ribosomes in vitro. Probably functions indirectly by altering the affinity of the ribosome for aminoacyl-tRNA, thus increasing their reactivity as acceptors for peptidyl transferase. The chain is Elongation factor P from Pseudomonas aeruginosa (strain LESB58).